Reading from the N-terminus, the 178-residue chain is Peptide deformylase 2 (178 aa).

Fe cation contacts are provided by C101 and H143. E144 is a catalytic residue. H147 provides a ligand contact to Fe cation.

Belongs to the polypeptide deformylase family. The cofactor is Fe(2+).

It catalyses the reaction N-terminal N-formyl-L-methionyl-[peptide] + H2O = N-terminal L-methionyl-[peptide] + formate. In terms of biological role, removes the formyl group from the N-terminal Met of newly synthesized proteins. Requires at least a dipeptide for an efficient rate of reaction. N-terminal L-methionine is a prerequisite for activity but the enzyme has broad specificity at other positions. This is Peptide deformylase 2 from Pseudomonas putida (strain ATCC 47054 / DSM 6125 / CFBP 8728 / NCIMB 11950 / KT2440).